Reading from the N-terminus, the 1035-residue chain is Ephrin type-A receptor 6 (1035 aa).

The N-terminal stretch at 1 to 22 is a signal peptide; it reads MGGCEVREFLLQFGFFLPLLTA. The Extracellular portion of the chain corresponds to 23–549; that stretch reads WTGDCSHVSN…MAAEQGQILV (527 aa). Residues 33-211 form the Eph LBD domain; sequence QVVLLDTTTV…FYKKCPFTVR (179 aa). Fibronectin type-III domains lie at 330 to 440 and 441 to 536; these read PPSA…TDHD and APSL…TGDE. Asn342, Asn396, and Asn409 each carry an N-linked (GlcNAc...) asparagine glycan. A helical membrane pass occupies residues 550-570; that stretch reads IATAAVGGFTLLVILTLFFLI. Residues 571-1035 are Cytoplasmic-facing; the sequence is TGRCQWYIKA…MHIQEKGFHV (465 aa). 2 positions are modified to phosphotyrosine; by autocatalysis: Tyr605 and Tyr611. Positions 630–943 constitute a Protein kinase domain; it reads IRIERVIGAG…RNPSALHTLV (314 aa). ATP contacts are provided by residues 636–644 and Lys662; that span reads IGAGEFGEV. The active-site Proton acceptor is Asp797. Phosphotyrosine; by autocatalysis is present on residues Tyr830 and Tyr977. The SAM domain maps to 960–1024; it reads PLFVTVGDWL…VSSIQTLRLH (65 aa). The PDZ-binding motif lies at 1033-1035; that stretch reads FHV.

It belongs to the protein kinase superfamily. Tyr protein kinase family. Ephrin receptor subfamily. In terms of assembly, heterotetramer upon binding of the ligand. The heterotetramer is composed of an ephrin dimer and a receptor dimer. Oligomerization is probably required to induce biological responses. Interacts (via SAM domain) with ANKS1A (via SAM domain).

It localises to the membrane. The catalysed reaction is L-tyrosyl-[protein] + ATP = O-phospho-L-tyrosyl-[protein] + ADP + H(+). Functionally, receptor tyrosine kinase which binds promiscuously GPI-anchored ephrin-A family ligands residing on adjacent cells, leading to contact-dependent bidirectional signaling into neighboring cells. The signaling pathway downstream of the receptor is referred to as forward signaling while the signaling pathway downstream of the ephrin ligand is referred to as reverse signaling. The protein is Ephrin type-A receptor 6 (Epha6) of Mus musculus (Mouse).